Reading from the N-terminus, the 99-residue chain is Large ribosomal subunit protein uL23 (99 aa).

This sequence belongs to the universal ribosomal protein uL23 family. Part of the 50S ribosomal subunit. Contacts protein L29, and trigger factor when it is bound to the ribosome.

In terms of biological role, one of the early assembly proteins it binds 23S rRNA. One of the proteins that surrounds the polypeptide exit tunnel on the outside of the ribosome. Forms the main docking site for trigger factor binding to the ribosome. The sequence is that of Large ribosomal subunit protein uL23 from Lachnospira eligens (strain ATCC 27750 / DSM 3376 / VPI C15-48 / C15-B4) (Eubacterium eligens).